A 200-amino-acid chain; its full sequence is Phospholipase A2 inhibitor gamma subunit A (200 aa).

The N-terminal stretch at 1–19 (MKSLHTICLLFIFIARGNS) is a signal peptide. 8 disulfide bridges follow: Cys-22–Cys-46, Cys-25–Cys-32, Cys-39–Cys-67, Cys-73–Cys-94, Cys-95–Cys-100, Cys-118–Cys-143, Cys-136–Cys-165, and Cys-169–Cys-191. Asn-176 is a glycosylation site (N-linked (GlcNAc...) asparagine).

Belongs to the CNF-like-inhibitor family. As to quaternary structure, occurs as a mixture of oligomers. Tetrameric arrangement appears to be the predominant quaternary structure. As to expression, expressed by the liver.

It is found in the secreted. Its function is as follows. Inhibits the enzymatic activity of phospholipase A2 (PA2). The polypeptide is Phospholipase A2 inhibitor gamma subunit A (Gloydius brevicaudus siniticus (Chinese mamushi)).